The primary structure comprises 394 residues: Bifunctional enzyme IspD/IspF (394 aa).

The interval 1–230 (MADTLAIVVA…AEALLGGGPV (230 aa)) is 2-C-methyl-D-erythritol 4-phosphate cytidylyltransferase. A 2-C-methyl-D-erythritol 2,4-cyclodiphosphate synthase region spans residues 231-394 (LVGFGYDVHR…RIVLPGDRVL (164 aa)). Positions 237 and 239 each coordinate a divalent metal cation. 4-CDP-2-C-methyl-D-erythritol 2-phosphate-binding positions include 237–239 (DVH) and 263–264 (HS). H271 serves as a coordination point for a divalent metal cation. 4-CDP-2-C-methyl-D-erythritol 2-phosphate is bound by residues 285–287 (DIG), 290–294 (FPDDD), 361–364 (TTTE), and F368.

It in the N-terminal section; belongs to the IspD/TarI cytidylyltransferase family. IspD subfamily. The protein in the C-terminal section; belongs to the IspF family. The cofactor is a divalent metal cation.

It catalyses the reaction 2-C-methyl-D-erythritol 4-phosphate + CTP + H(+) = 4-CDP-2-C-methyl-D-erythritol + diphosphate. The enzyme catalyses 4-CDP-2-C-methyl-D-erythritol 2-phosphate = 2-C-methyl-D-erythritol 2,4-cyclic diphosphate + CMP. It participates in isoprenoid biosynthesis; isopentenyl diphosphate biosynthesis via DXP pathway; isopentenyl diphosphate from 1-deoxy-D-xylulose 5-phosphate: step 2/6. Its pathway is isoprenoid biosynthesis; isopentenyl diphosphate biosynthesis via DXP pathway; isopentenyl diphosphate from 1-deoxy-D-xylulose 5-phosphate: step 4/6. In terms of biological role, bifunctional enzyme that catalyzes the formation of 4-diphosphocytidyl-2-C-methyl-D-erythritol from CTP and 2-C-methyl-D-erythritol 4-phosphate (MEP) (IspD), and catalyzes the conversion of 4-diphosphocytidyl-2-C-methyl-D-erythritol 2-phosphate (CDP-ME2P) to 2-C-methyl-D-erythritol 2,4-cyclodiphosphate (ME-CPP) with a corresponding release of cytidine 5-monophosphate (CMP) (IspF). This chain is Bifunctional enzyme IspD/IspF, found in Desulforudis audaxviator (strain MP104C).